Here is a 122-residue protein sequence, read N- to C-terminus: HLLQFNKMIKFETRKNAVPFYAFYGCYCGWGGQRRPKDATDRCCFVHDCCYGKLTKCNTKWDIYRYSLKSGYITCGKGTWCKEQICECDRVAAECLRRSLSTYKNEYMFYPKSRCRRPSETC.

Intrachain disulfides connect C26-C115, C28-C44, C43-C95, C49-C122, C50-C88, C57-C81, and C75-C86. The Ca(2+) site is built by Y27, G29, and G31. H47 is an active-site residue. Ca(2+) is bound at residue D48. D89 is an active-site residue.

Belongs to the phospholipase A2 family. Group II subfamily. D49 sub-subfamily. As to quaternary structure, when this protein is associated with crotapotin (F5 or F7), it forms the crotoxin protein. The cofactor is Ca(2+). Expressed by the venom gland.

The protein localises to the secreted. It carries out the reaction a 1,2-diacyl-sn-glycero-3-phosphocholine + H2O = a 1-acyl-sn-glycero-3-phosphocholine + a fatty acid + H(+). Activated by heparin. Inhibited by its chaperone crotapotin. In terms of biological role, snake venom phospholipase A2 (PLA2) that shows moderate neurotoxic activity in isolated mouse phrenic nerve diaphragm but shows high neurotoxic activity in a chick biventer cervis preparation. Also shows a high bactericidal effect against both Gram-negative and Gram-positive bacteria. PLA2 catalyzes the calcium-dependent hydrolysis of the 2-acyl groups in 3-sn-phosphoglycerides. This chain is Basic phospholipase A2 F15, found in Crotalus durissus terrificus (South American rattlesnake).